A 177-amino-acid polypeptide reads, in one-letter code: uncharacterized protein (177 aa).

This is an uncharacterized protein from Homo sapiens (Human).